The following is a 98-amino-acid chain: Co-chaperonin GroES 4 (98 aa).

This sequence belongs to the GroES chaperonin family. As to quaternary structure, heptamer of 7 subunits arranged in a ring. Interacts with the chaperonin GroEL.

Its subcellular location is the cytoplasm. Functionally, together with the chaperonin GroEL, plays an essential role in assisting protein folding. The GroEL-GroES system forms a nano-cage that allows encapsulation of the non-native substrate proteins and provides a physical environment optimized to promote and accelerate protein folding. GroES binds to the apical surface of the GroEL ring, thereby capping the opening of the GroEL channel. The protein is Co-chaperonin GroES 4 of Mesorhizobium japonicum (strain LMG 29417 / CECT 9101 / MAFF 303099) (Mesorhizobium loti (strain MAFF 303099)).